The following is a 177-amino-acid chain: Prorelaxin (177 aa).

An N-terminal signal peptide occupies residues 1 to 25; sequence MLRWFLSHLLGVWLLLSQLPREIPA. 3 disulfide bridges follow: cysteine 34–cysteine 164, cysteine 46–cysteine 177, and cysteine 163–cysteine 168. Positions 63-149 are cleaved as a propeptide — connecting peptide; the sequence is QISEPLAEVV…KSLSKLDKHP (87 aa).

Belongs to the insulin family. As to quaternary structure, heterodimer of a B chain and an A chain linked by two disulfide bonds. As to expression, placenta; syncytiotrophoblast.

It is found in the secreted. In terms of biological role, relaxin is an ovarian hormone that acts with estrogen to produce dilatation of the birth canal in many mammals. The protein is Prorelaxin (RLN) of Canis lupus familiaris (Dog).